Reading from the N-terminus, the 394-residue chain is Phosphoglycerate kinase (394 aa).

Substrate is bound by residues 21–23 (DFN), Arg36, 59–62 (HLGR), Arg118, and Arg151. Phosphoserine is present on Ser183. Residues Lys201 and Gly292 each coordinate ATP. Position 299 is a phosphothreonine (Thr299). Residues Glu323 and 350-353 (GGDS) each bind ATP.

It belongs to the phosphoglycerate kinase family. Monomer.

The protein resides in the cytoplasm. It catalyses the reaction (2R)-3-phosphoglycerate + ATP = (2R)-3-phospho-glyceroyl phosphate + ADP. It functions in the pathway carbohydrate degradation; glycolysis; pyruvate from D-glyceraldehyde 3-phosphate: step 2/5. The polypeptide is Phosphoglycerate kinase (Bacillus anthracis (strain A0248)).